The primary structure comprises 245 residues: Biosynthetic peptidoglycan transglycosylase (245 aa).

A helical membrane pass occupies residues 20-42 (VYAGSVFAGAWLATQLFYLAQIA).

The protein belongs to the glycosyltransferase 51 family.

It is found in the cell inner membrane. The catalysed reaction is [GlcNAc-(1-&gt;4)-Mur2Ac(oyl-L-Ala-gamma-D-Glu-L-Lys-D-Ala-D-Ala)](n)-di-trans,octa-cis-undecaprenyl diphosphate + beta-D-GlcNAc-(1-&gt;4)-Mur2Ac(oyl-L-Ala-gamma-D-Glu-L-Lys-D-Ala-D-Ala)-di-trans,octa-cis-undecaprenyl diphosphate = [GlcNAc-(1-&gt;4)-Mur2Ac(oyl-L-Ala-gamma-D-Glu-L-Lys-D-Ala-D-Ala)](n+1)-di-trans,octa-cis-undecaprenyl diphosphate + di-trans,octa-cis-undecaprenyl diphosphate + H(+). The protein operates within cell wall biogenesis; peptidoglycan biosynthesis. Functionally, peptidoglycan polymerase that catalyzes glycan chain elongation from lipid-linked precursors. The polypeptide is Biosynthetic peptidoglycan transglycosylase (Burkholderia lata (strain ATCC 17760 / DSM 23089 / LMG 22485 / NCIMB 9086 / R18194 / 383)).